A 361-amino-acid chain; its full sequence is Beta-hexosaminidase (361 aa).

Substrate-binding positions include aspartate 69, arginine 77, arginine 144, and 174 to 175 (KH). Histidine 187 acts as the Proton donor/acceptor in catalysis. Aspartate 258 acts as the Nucleophile in catalysis.

The protein belongs to the glycosyl hydrolase 3 family. NagZ subfamily.

It localises to the cytoplasm. It carries out the reaction Hydrolysis of terminal non-reducing N-acetyl-D-hexosamine residues in N-acetyl-beta-D-hexosaminides.. It participates in cell wall biogenesis; peptidoglycan recycling. Its function is as follows. Plays a role in peptidoglycan recycling by cleaving the terminal beta-1,4-linked N-acetylglucosamine (GlcNAc) from peptide-linked peptidoglycan fragments, giving rise to free GlcNAc, anhydro-N-acetylmuramic acid and anhydro-N-acetylmuramic acid-linked peptides. The sequence is that of Beta-hexosaminidase from Neisseria meningitidis serogroup C / serotype 2a (strain ATCC 700532 / DSM 15464 / FAM18).